A 316-amino-acid polypeptide reads, in one-letter code: N-acetyl-gamma-glutamyl-phosphate reductase (316 aa).

The active site involves C136.

It belongs to the NAGSA dehydrogenase family. Type 1 subfamily.

It is found in the cytoplasm. The catalysed reaction is N-acetyl-L-glutamate 5-semialdehyde + phosphate + NADP(+) = N-acetyl-L-glutamyl 5-phosphate + NADPH + H(+). It functions in the pathway amino-acid biosynthesis; L-arginine biosynthesis; N(2)-acetyl-L-ornithine from L-glutamate: step 3/4. Its function is as follows. Catalyzes the NADPH-dependent reduction of N-acetyl-5-glutamyl phosphate to yield N-acetyl-L-glutamate 5-semialdehyde. The chain is N-acetyl-gamma-glutamyl-phosphate reductase from Xanthomonas axonopodis pv. citri (strain 306).